Consider the following 332-residue polypeptide: Fructose-1,6-bisphosphatase class 1 (332 aa).

Positions 92, 113, 115, and 116 each coordinate Mg(2+). Residues 116 to 119 (DGSS), Asn209, Tyr242, and Lys272 contribute to the substrate site. Glu278 is a binding site for Mg(2+).

The protein belongs to the FBPase class 1 family. As to quaternary structure, homotetramer. The cofactor is Mg(2+).

Its subcellular location is the cytoplasm. It catalyses the reaction beta-D-fructose 1,6-bisphosphate + H2O = beta-D-fructose 6-phosphate + phosphate. Its pathway is carbohydrate biosynthesis; Calvin cycle. The protein is Fructose-1,6-bisphosphatase class 1 of Prosthecochloris aestuarii (strain DSM 271 / SK 413).